The primary structure comprises 263 residues: Acetylglutamate kinase (263 aa).

Substrate-binding positions include 48–49 (GG), Arg-70, and Asn-162.

This sequence belongs to the acetylglutamate kinase family. ArgB subfamily.

The protein localises to the cytoplasm. It catalyses the reaction N-acetyl-L-glutamate + ATP = N-acetyl-L-glutamyl 5-phosphate + ADP. Its pathway is amino-acid biosynthesis; L-arginine biosynthesis; N(2)-acetyl-L-ornithine from L-glutamate: step 2/4. Catalyzes the ATP-dependent phosphorylation of N-acetyl-L-glutamate. This Vibrio vulnificus (strain CMCP6) protein is Acetylglutamate kinase.